The following is a 291-amino-acid chain: ATP synthase gamma chain (291 aa).

Belongs to the ATPase gamma chain family. In terms of assembly, F-type ATPases have 2 components, CF(1) - the catalytic core - and CF(0) - the membrane proton channel. CF(1) has five subunits: alpha(3), beta(3), gamma(1), delta(1), epsilon(1). CF(0) has three main subunits: a, b and c.

Its subcellular location is the cell inner membrane. Its function is as follows. Produces ATP from ADP in the presence of a proton gradient across the membrane. The gamma chain is believed to be important in regulating ATPase activity and the flow of protons through the CF(0) complex. This chain is ATP synthase gamma chain, found in Ruegeria pomeroyi (strain ATCC 700808 / DSM 15171 / DSS-3) (Silicibacter pomeroyi).